The sequence spans 528 residues: MAGGGGAERVRVGAAAAGLLPPSCRQPRRRESRERLSVCSKLCYAVGGAPYQTTGCALGFFLQIYLLDVAQLDPFYASIILFVGRAWDAITDPMVGFFISKTPWTRFGRLMPWIIFSTPFAVISYFLIWFVPDISTGQVMWYLIFYCIFQTLVTCFHVPYSALTMFISREQSERDSATAYRMTVEVLGTVLGTAIQGQIVGKAVTPCIENPPFLSETNFSVAIRNVNMTHYTGSLADTRNAYMVAAGVIGGLYILCAVILSVGVREKRESSELQSDEPVSFFRGLKLVMNHGAYIKLITGFLFTSLAFMLLEGNFALFCTYTLGFRNEFQNILLAIMLSATLTIPFWQWFLTRFGKKTAVYVGISSAVPFLITVVVLDSNLVVTYIVAVAAGISVAAAFLLPWSMLPDVIDDFKLQHPESRGHEAIFFSFYVFFTKFTSGVSLGISTLSLDFAGYQTRGCSQPSEVNITLKLLVSAVPVGLILLGLLLFKLYPIDEEKRRENKKALQDLREESNSSSESDSTELANIV.

The Cytoplasmic portion of the chain corresponds to 1–37; it reads MAGGGGAERVRVGAAAAGLLPPSCRQPRRRESRERLS. The helical transmembrane segment at 38 to 66 threads the bilayer; sequence VCSKLCYAVGGAPYQTTGCALGFFLQIYL. The Extracellular portion of the chain corresponds to 67–73; the sequence is LDVAQLD. The chain crosses the membrane as a helical span at residues 74 to 99; sequence PFYASIILFVGRAWDAITDPMVGFFI. The Cytoplasmic segment spans residues 100 to 109; that stretch reads SKTPWTRFGR. A helical transmembrane segment spans residues 110-129; it reads LMPWIIFSTPFAVISYFLIW. The Extracellular portion of the chain corresponds to 130–138; that stretch reads FVPDISTGQ. Residues 139 to 161 traverse the membrane as a helical segment; it reads VMWYLIFYCIFQTLVTCFHVPYS. At 162 to 176 the chain is on the cytoplasmic side; sequence ALTMFISREQSERDS. The chain crosses the membrane as a helical span at residues 177-199; that stretch reads ATAYRMTVEVLGTVLGTAIQGQI. The Extracellular portion of the chain corresponds to 200-241; it reads VGKAVTPCIENPPFLSETNFSVAIRNVNMTHYTGSLADTRNA. Cysteines 207 and 460 form a disulfide. N-linked (GlcNAc...) asparagine glycans are attached at residues Asn-218 and Asn-227. The helical transmembrane segment at 242–263 threads the bilayer; it reads YMVAAGVIGGLYILCAVILSVG. Residues 264 to 295 are Cytoplasmic-facing; it reads VREKRESSELQSDEPVSFFRGLKLVMNHGAYI. A helical membrane pass occupies residues 296–319; that stretch reads KLITGFLFTSLAFMLLEGNFALFC. Residues 320-328 lie on the Extracellular side of the membrane; it reads TYTLGFRNE. Residues 329-351 form a helical membrane-spanning segment; that stretch reads FQNILLAIMLSATLTIPFWQWFL. The Cytoplasmic portion of the chain corresponds to 352 to 355; sequence TRFG. The helical transmembrane segment at 356–376 threads the bilayer; the sequence is KKTAVYVGISSAVPFLITVVV. Topologically, residues 377–381 are extracellular; the sequence is LDSNL. Residues 382–404 form a helical membrane-spanning segment; sequence VVTYIVAVAAGISVAAAFLLPWS. The Cytoplasmic portion of the chain corresponds to 405–427; the sequence is MLPDVIDDFKLQHPESRGHEAIF. The chain crosses the membrane as a helical span at residues 428–450; the sequence is FSFYVFFTKFTSGVSLGISTLSL. Topologically, residues 451–467 are extracellular; sequence DFAGYQTRGCSQPSEVN. The helical transmembrane segment at 468–490 threads the bilayer; it reads ITLKLLVSAVPVGLILLGLLLFK. At 491–528 the chain is on the cytoplasmic side; sequence LYPIDEEKRRENKKALQDLREESNSSSESDSTELANIV. The span at 503 to 513 shows a compositional bias: basic and acidic residues; it reads KKALQDLREES. Residues 503-528 are disordered; the sequence is KKALQDLREESNSSSESDSTELANIV. Residues 514–528 show a composition bias toward low complexity; the sequence is NSSSESDSTELANIV.

Belongs to the major facilitator superfamily.

It localises to the cell membrane. Its subcellular location is the endoplasmic reticulum membrane. It carries out the reaction a 1-acyl-sn-glycero-3-phosphocholine(in) + Na(+)(in) = a 1-acyl-sn-glycero-3-phosphocholine(out) + Na(+)(out). It catalyses the reaction 1-(4Z,7Z,10Z,13Z,16Z,19Z-docosahexaenoyl)-sn-glycero-3-phosphocholine(in) + Na(+)(in) = 1-(4Z,7Z,10Z,13Z,16Z,19Z-docosahexaenoyl)-sn-glycero-3-phosphocholine(out) + Na(+)(out). The enzyme catalyses 1-(9Z-octadecenoyl)-sn-glycero-3-phosphocholine(in) + Na(+)(in) = 1-(9Z-octadecenoyl)-sn-glycero-3-phosphocholine(out) + Na(+)(out). The catalysed reaction is 1-hexadecanoyl-sn-glycero-3-phosphocholine(in) + Na(+)(in) = 1-hexadecanoyl-sn-glycero-3-phosphocholine(out) + Na(+)(out). It carries out the reaction a 1-acyl-sn-glycero-3-phosphoethanolamine(in) + Na(+)(in) = a 1-acyl-sn-glycero-3-phosphoethanolamine(out) + Na(+)(out). Sodium-dependent lysophosphatidylcholine (LPC) symporter, which plays an essential role for blood-brain barrier formation and function. Specifically expressed in endothelium of the blood-brain barrier of micro-vessels and transports LPC into the brain. Transport of LPC is essential because it constitutes the major mechanism by which docosahexaenoic acid (DHA), an omega-3 fatty acid that is essential for normal brain growth and cognitive function, enters the brain. Transports LPC carrying long-chain fatty acids such LPC oleate and LPC palmitate with a minimum acyl chain length of 14 carbons. Does not transport docosahexaenoic acid in unesterified fatty acid. The sequence is that of Sodium-dependent lysophosphatidylcholine symporter 1 from Gallus gallus (Chicken).